Consider the following 860-residue polypeptide: Leucine--tRNA ligase (860 aa).

Positions 42–52 (PYPSGRLHMGH) match the 'HIGH' region motif. Residues 619 to 623 (KMSKS) carry the 'KMSKS' region motif. Lysine 622 provides a ligand contact to ATP.

It belongs to the class-I aminoacyl-tRNA synthetase family.

The protein localises to the cytoplasm. The catalysed reaction is tRNA(Leu) + L-leucine + ATP = L-leucyl-tRNA(Leu) + AMP + diphosphate. The sequence is that of Leucine--tRNA ligase from Escherichia coli (strain SMS-3-5 / SECEC).